The chain runs to 172 residues: Galectin-related protein (172 aa).

Alanine 2 is subject to N-acetylalanine. 2 positions are modified to phosphoserine: serine 22 and serine 25. One can recognise a Galectin domain in the interval 39–168 (PFCGHIKGGM…TIKINGDLQI (130 aa)).

In terms of assembly, monomer.

In terms of biological role, does not bind lactose, and may not bind carbohydrates. This chain is Galectin-related protein (LGALSL), found in Homo sapiens (Human).